A 625-amino-acid chain; its full sequence is Interferon-induced GTP-binding protein Mx2 (625 aa).

In terms of domain architecture, Dynamin-type G spans 29 to 302 (DLALPAIAVI…LVFHIGRCLP (274 aa)). Positions 39 to 46 (GDQSSGKS) are G1 motif. 39 to 46 (GDQSSGKS) is a binding site for GTP. The interval 64-66 (VTR) is G2 motif. Residues 140–143 (DLPG) are G3 motif. GTP contacts are provided by residues 140–144 (DLPGI) and 209–212 (TKPD). Residues 209 to 212 (TKPD) form a G4 motif region. A G5 motif region spans residues 241-244 (RCRG). Positions 539–625 (REELTCHLKS…TEALKYLAKF (87 aa)) constitute a GED domain.

This sequence belongs to the TRAFAC class dynamin-like GTPase superfamily. Dynamin/Fzo/YdjA family.

It is found in the cytoplasm. This chain is Interferon-induced GTP-binding protein Mx2 (mx2), found in Ictalurus punctatus (Channel catfish).